We begin with the raw amino-acid sequence, 268 residues long: Small ribosomal subunit protein uS3 (268 aa).

The region spanning 39–107 is the KH type-2 domain; the sequence is VREYLKKKLK…PVHVNIEEIR (69 aa). Positions 216 to 268 are disordered; that stretch reads VEEVAEEKRPRRNARPGGDRRPRRDGEGGGPAGARRGAPRRAGGAGGDGKTGE. Positions 232-242 are enriched in basic and acidic residues; sequence GGDRRPRRDGE. Over residues 248–257 the composition is skewed to low complexity; sequence GARRGAPRRA. The span at 258–268 shows a compositional bias: gly residues; that stretch reads GGAGGDGKTGE.

This sequence belongs to the universal ribosomal protein uS3 family. As to quaternary structure, part of the 30S ribosomal subunit. Forms a tight complex with proteins S10 and S14.

Its function is as follows. Binds the lower part of the 30S subunit head. Binds mRNA in the 70S ribosome, positioning it for translation. The polypeptide is Small ribosomal subunit protein uS3 (Paraburkholderia phytofirmans (strain DSM 17436 / LMG 22146 / PsJN) (Burkholderia phytofirmans)).